A 233-amino-acid chain; its full sequence is Low affinity immunoglobulin gamma Fc region receptor III-B (233 aa).

Positions methionine 1–alanine 16 are cleaved as a signal peptide. Ig-like C2-type domains are found at residues lysine 40 to leucine 96 and glutamate 121 to lysine 179. Cysteine 47 and cysteine 89 form a disulfide bridge. N-linked (GlcNAc...) asparagine glycosylation is found at asparagine 56, asparagine 63, asparagine 82, and asparagine 92. A disulfide bridge links cysteine 128 with cysteine 172. Asparagine 180 and asparagine 187 each carry an N-linked (GlcNAc...) asparagine glycan. A lipid anchor (GPI-anchor amidated serine) is attached at serine 200. Positions serine 201–isoleucine 233 are cleaved as a propeptide — removed in mature form.

In terms of assembly, monomer. Interacts with INPP5D/SHIP1. Post-translationally, glycosylated. Glycosylation plays an inhibitory role in the interaction with IgG3. In terms of processing, the soluble form is produced by a proteolytic cleavage. In terms of tissue distribution, expressed specifically by polymorphonuclear leukocytes (neutrophils). Also expressed by stimulated eosinophils.

It is found in the cell membrane. The protein resides in the secreted. Receptor for the Fc region of immunoglobulins gamma. Low affinity receptor. Binds complexed or aggregated IgG and also monomeric IgG. Contrary to III-A, is not capable to mediate antibody-dependent cytotoxicity and phagocytosis. May serve as a trap for immune complexes in the peripheral circulation which does not activate neutrophils. The protein is Low affinity immunoglobulin gamma Fc region receptor III-B (FCGR3B) of Homo sapiens (Human).